A 357-amino-acid polypeptide reads, in one-letter code: Zinc finger protein 830 (357 aa).

The C2H2-type zinc finger occupies cysteine 47–histidine 69. Disordered stretches follow at residues arginine 98–proline 126, aspartate 157–leucine 194, and alanine 231–glutamine 255. Positions lysine 99–glutamate 115 are enriched in basic and acidic residues. Over residues aspartate 157–asparagine 168 the composition is skewed to acidic residues. Residues alanine 242–glutamine 255 show a composition bias toward basic and acidic residues. Positions alanine 279–lysine 325 form a coiled coil.

Its subcellular location is the nucleus. The protein resides in the chromosome. The protein localises to the nucleus speckle. Its function is as follows. May act as an important regulator of the cell cycle that participates in the maintenance of genome integrity. This is Zinc finger protein 830 from Xenopus tropicalis (Western clawed frog).